We begin with the raw amino-acid sequence, 515 residues long: 2-isopropylmalate synthase (515 aa).

The 263-residue stretch at 5 to 267 (VIIFDTTLRD…STGIKHEEIH (263 aa)) folds into the Pyruvate carboxyltransferase domain. Mn(2+)-binding residues include Asp14, His202, His204, and Asn238. The regulatory domain stretch occupies residues 392–515 (KLNYLSVQSG…EMKQKKIATV (124 aa)).

This sequence belongs to the alpha-IPM synthase/homocitrate synthase family. LeuA type 1 subfamily. In terms of assembly, homodimer. It depends on Mn(2+) as a cofactor.

Its subcellular location is the cytoplasm. It carries out the reaction 3-methyl-2-oxobutanoate + acetyl-CoA + H2O = (2S)-2-isopropylmalate + CoA + H(+). It participates in amino-acid biosynthesis; L-leucine biosynthesis; L-leucine from 3-methyl-2-oxobutanoate: step 1/4. Its function is as follows. Catalyzes the condensation of the acetyl group of acetyl-CoA with 3-methyl-2-oxobutanoate (2-ketoisovalerate) to form 3-carboxy-3-hydroxy-4-methylpentanoate (2-isopropylmalate). This is 2-isopropylmalate synthase from Vibrio parahaemolyticus serotype O3:K6 (strain RIMD 2210633).